The sequence spans 1050 residues: Elongation factor 3 (1050 aa).

The ADP site is built by Val43 and His45. One copy of the HEAT 1 repeat lies at 46-83; sequence DVPVEFFEDLKKQIQSKDAKVSLAALDAYKHIASTNGL. Ser86 lines the ADP pocket. HEAT repeat units follow at residues 89–126, 127–165, 169–206, 208–244, 245–282, and 288–326; these read PYVV…AITP, TAVK…TAKA, LRMP…TIDN, DIEK…EVTM, ATLS…LVED, and PFMD…VGAV. Positions 395, 399, and 400 each coordinate ADP. 2 consecutive ABC transporter domains span residues 429–646 and 672–998; these read DEGE…YYEL and VKVS…KKDD. ADP contacts are provided by Asn708, Glu927, Asn930, and His956. The interval 980-1050 is disordered; sequence GHNWVQGQGS…DAYVSSDEEF (71 aa). A compositionally biased stretch (basic residues) spans 1013-1037; that stretch reads AAKKKKKLSSAELRKKKKERMKKKK.

It belongs to the ABC transporter superfamily. ABCF family. EF3 subfamily. Monomer.

It localises to the cytoplasm. The catalysed reaction is ATP + H2O = ADP + phosphate + H(+). Its pathway is protein biosynthesis; polypeptide chain elongation. Its function is as follows. Ribosome-dependent ATPase that functions in cytoplasmic translation elongation. Required for the ATP-dependent release of deacylated tRNA from the ribosomal E-site during protein biosynthesis. Stimulates the eEF1A-dependent binding of aminoacyl-tRNA to the ribosomal A-site, which has reduced affinity for tRNA as long as the E-site is occupied. Assists translation termination by stimulating the release of nascent protein from the ribosome by release factors. The polypeptide is Elongation factor 3 (CEF3) (Candida albicans (strain SC5314 / ATCC MYA-2876) (Yeast)).